A 70-amino-acid polypeptide reads, in one-letter code: Putative defensin-like protein 73 (70 aa).

The signal sequence occupies residues 1-29 (MNCKIEFMSFLVMTSIVILFLFVSGKVEA). Disulfide bonds link cysteine 33–cysteine 68, cysteine 37–cysteine 57, cysteine 43–cysteine 66, and cysteine 47–cysteine 67.

It belongs to the DEFL family.

The protein localises to the secreted. The polypeptide is Putative defensin-like protein 73 (LCR44) (Arabidopsis thaliana (Mouse-ear cress)).